A 4731-amino-acid polypeptide reads, in one-letter code: Dynein axonemal heavy chain 8 (4731 aa).

Positions 1–145 (MESEEGNAEP…SKFRRSMTGI (145 aa)) are disordered. The span at 9–55 (EPPPPSEEAPPPVVEEAPPPLPPEDTAPPPPEEQAPPPEGDAAPPPT) shows a compositional bias: pro residues. Residues 66-75 (EAPHPEDPKL) show a composition bias toward basic and acidic residues. The segment covering 94–106 (SDEEVTLPEDEES) has biased composition (acidic residues). A compositionally biased stretch (polar residues) spans 122 to 133 (SVLSDGISQSSR). The stretch at 145 to 169 (IPNLQETLKEKQARFREARENRKMK) forms a coiled coil. Serine 917 is modified (phosphoserine). Positions 1177-1201 (FQNNSRGSDQPPASGKPLKKEERSF) are disordered. The stretch at 1543-1567 (DVDIEKINAELQEFQNRCRKLPRAL) forms a coiled coil. AAA regions lie at residues 2049-2271 (YQNE…VLRT), 2331-2550 (SAVD…KLSL), 2657-2910 (FYPT…IWQG), and 3021-3275 (QFNE…YRRR). ATP is bound by residues 2087–2094 (GPAGTGKT) and 2369–2376 (GPSGSGKT). The interval 3290-3587 (YKSIYTDKVK…MDLLNDADMC (298 aa)) is stalk. Coiled-coil stretches lie at residues 3313–3405 (DKLM…ALNT), 3531–3583 (LKAN…LLND), and 3836–3871 (RVIL…DNLL). AAA stretches follow at residues 3673–3903 (LVDP…EVSE) and 4118–4332 (ARKY…FIQN).

This sequence belongs to the dynein heavy chain family. In terms of assembly, consists of at least two heavy chains and a number of intermediate and light chains. As to expression, isoform 1 and/or isoform 2 are expressed in spermatocytes and mature sperm (at protein level). Testis-specific. Accumulates exclusively in mid to late spermatocytes.

The protein localises to the cytoplasm. It localises to the cytoskeleton. Its subcellular location is the flagellum axoneme. Its function is as follows. Force generating protein component of the outer dynein arms (ODAs) in the sperm flagellum. Produces force towards the minus ends of microtubules. Dynein has ATPase activity; the force-producing power stroke is thought to occur on release of ADP. Involved in sperm motility; implicated in sperm flagellar assembly. In Mus musculus (Mouse), this protein is Dynein axonemal heavy chain 8 (Dnah8).